Consider the following 778-residue polypeptide: General transcription and DNA repair factor IIH helicase subunit XPD/RAD3 (778 aa).

The region spanning 7–285 is the Helicase ATP-binding domain; that stretch reads DLPVLFPYPK…KVDSQKLQDE (279 aa). 42–49 is an ATP binding site; sequence MPSGTGKT. Positions 115, 133, 156, and 191 each coordinate [4Fe-4S] cluster. Residues 235 to 238 carry the DEAH box motif; that stretch reads DEAH. Basic and acidic residues predominate over residues 750–765; the sequence is SRKDQGGFIENENKEG. Residues 750–778 are disordered; it reads SRKDQGGFIENENKEGEQDEDEDEDIEMQ. Acidic residues predominate over residues 766-778; the sequence is EQDEDEDEDIEMQ.

This sequence belongs to the helicase family. RAD3/XPD subfamily. As to quaternary structure, component of the 7-subunit TFIIH core complex composed of XPB/SSL2, XPD/RAD3, SSL1, TFB1, TFB2, TFB4 and TFB5, which is active in NER. The core complex associates with the 3-subunit CTD-kinase module TFIIK composed of CCL1, KIN28 and TFB3 to form the 10-subunit holoenzyme (holo-TFIIH) active in transcription. An additionnal subunit, TFB6, plays a role in the dissociation of the SSL2 helicase from TFIIH after transcription initiation. It depends on [4Fe-4S] cluster as a cofactor. Mg(2+) serves as cofactor.

It localises to the nucleus. The catalysed reaction is Couples ATP hydrolysis with the unwinding of duplex DNA at the replication fork by translocating in the 5'-3' direction. This creates two antiparallel DNA single strands (ssDNA). The leading ssDNA polymer is the template for DNA polymerase III holoenzyme which synthesizes a continuous strand.. It carries out the reaction ATP + H2O = ADP + phosphate + H(+). Its function is as follows. ATP-dependent 5'-3' DNA helicase. Component of the general transcription and DNA repair factor IIH (TFIIH) core complex, which is involved in general and transcription-coupled nucleotide excision repair (NER) of damaged DNA and, when complexed to TFIIK, in RNA transcription by RNA polymerase II. In NER, TFIIH acts by opening DNA around the lesion to allow the excision of the damaged oligonucleotide and its replacement by a new DNA fragment. The ATP-dependent helicase activity of XPD/RAD3 is required for DNA opening. In transcription, TFIIH has an essential role in transcription initiation. When the pre-initiation complex (PIC) has been established, TFIIH is required for promoter opening and promoter escape. Phosphorylation of the C-terminal tail (CTD) of the largest subunit of RNA polymerase II by the kinase module TFIIK controls the initiation of transcription. XPD/RAD3 acts by forming a bridge between TFIIK and the core-TFIIH complex. Involved in the maintenance of the fidelity of DNA replication. Has single-stranded DNA-dependent ATPase activity. 5'-3' DNA helicase activity requires ATP (dATP partially substitutes), will unwind over 800 bp dsDNA. Able to unwind an RNA:DNA hybrid. This Saccharomyces cerevisiae (strain ATCC 204508 / S288c) (Baker's yeast) protein is General transcription and DNA repair factor IIH helicase subunit XPD/RAD3.